The following is a 563-amino-acid chain: Arginine--tRNA ligase (563 aa).

Residues 121 to 131 (PNIAKPFSIGH) carry the 'HIGH' region motif.

This sequence belongs to the class-I aminoacyl-tRNA synthetase family. Monomer.

Its subcellular location is the cytoplasm. It catalyses the reaction tRNA(Arg) + L-arginine + ATP = L-arginyl-tRNA(Arg) + AMP + diphosphate. The chain is Arginine--tRNA ligase from Streptococcus pyogenes serotype M12 (strain MGAS2096).